A 137-amino-acid polypeptide reads, in one-letter code: Small ribosomal subunit protein uS11 (137 aa).

2 disordered regions span residues 1–31 (MPPK…AAHI) and 117–137 (TISD…RRRV). Basic residues predominate over residues 12–21 (KTQKARRRDK).

It belongs to the universal ribosomal protein uS11 family. As to quaternary structure, part of the 30S ribosomal subunit. Interacts with proteins S7 and S18. Binds to IF-3.

Functionally, located on the platform of the 30S subunit, it bridges several disparate RNA helices of the 16S rRNA. Forms part of the Shine-Dalgarno cleft in the 70S ribosome. This is Small ribosomal subunit protein uS11 from Rhodococcus jostii (strain RHA1).